The sequence spans 333 residues: Large ribosomal subunit protein mL44 (333 aa).

A mitochondrion-targeting transit peptide spans 1-30; that stretch reads MASAVFRLLQQGPRRLLAPAVPTLAPPVRG. In terms of domain architecture, RNase III spans 86–228; sequence DLLKTAFINS…LITQMTGKEL (143 aa). The DRBM domain maps to 236–306; it reads NPMGLLVEEL…ARVALRKLYG (71 aa). Basic and acidic residues predominate over residues 311-327; the sequence is RRPWDYSKPKESPKRAE. Residues 311 to 333 form a disordered region; that stretch reads RRPWDYSKPKESPKRAEQTSVAS.

The protein belongs to the ribonuclease III family. Mitochondrion-specific ribosomal protein mL44 subfamily. As to quaternary structure, component of the mitochondrial ribosome large subunit (39S) which comprises a 16S rRNA and about 50 distinct proteins.

Its subcellular location is the mitochondrion. In terms of biological role, component of the 39S subunit of mitochondrial ribosome. May have a function in the assembly/stability of nascent mitochondrial polypeptides exiting the ribosome. This chain is Large ribosomal subunit protein mL44 (Mrpl44), found in Mus musculus (Mouse).